The sequence spans 32 residues: Ribulose bisphosphate carboxylase/oxygenase activase, chloroplastic (32 aa).

A disordered region spans residues 13 to 32; that stretch reads FGALREGPPTFEQPAMTIEK.

This sequence belongs to the RuBisCO activase family.

It localises to the plastid. It is found in the chloroplast stroma. Functionally, activation of RuBisCO (ribulose-1,5-bisphosphate carboxylase/oxygenase; EC 4.1.1.39) involves the ATP-dependent carboxylation of the epsilon-amino group of lysine leading to a carbamate structure. The protein is Ribulose bisphosphate carboxylase/oxygenase activase, chloroplastic of Populus euphratica (Euphrates poplar).